Consider the following 257-residue polypeptide: Imidazole glycerol phosphate synthase subunit HisF (257 aa).

Active-site residues include D12 and D131.

This sequence belongs to the HisA/HisF family. As to quaternary structure, heterodimer of HisH and HisF.

It localises to the cytoplasm. It carries out the reaction 5-[(5-phospho-1-deoxy-D-ribulos-1-ylimino)methylamino]-1-(5-phospho-beta-D-ribosyl)imidazole-4-carboxamide + L-glutamine = D-erythro-1-(imidazol-4-yl)glycerol 3-phosphate + 5-amino-1-(5-phospho-beta-D-ribosyl)imidazole-4-carboxamide + L-glutamate + H(+). It participates in amino-acid biosynthesis; L-histidine biosynthesis; L-histidine from 5-phospho-alpha-D-ribose 1-diphosphate: step 5/9. In terms of biological role, IGPS catalyzes the conversion of PRFAR and glutamine to IGP, AICAR and glutamate. The HisF subunit catalyzes the cyclization activity that produces IGP and AICAR from PRFAR using the ammonia provided by the HisH subunit. The sequence is that of Imidazole glycerol phosphate synthase subunit HisF from Burkholderia mallei (strain NCTC 10247).